A 522-amino-acid polypeptide reads, in one-letter code: Anti-sigma-I factor RsgI4 (522 aa).

Over 1-51 the chain is Cytoplasmic; it reads MNLGVVIKIKRKKAIIVTETGEFKAVNARNGMFLGQKILFDQQDVIENNRN. The RsgI N-terminal anti-sigma domain maps to 2–49; it reads NLGVVIKIKRKKAIIVTETGEFKAVNARNGMFLGQKILFDQQDVIENN. The chain crosses the membrane as a helical span at residues 52–72; it reads GIGLAYSAAIAGMVAVFVFMF. Residues 73-522 lie on the Extracellular side of the membrane; the sequence is TYFGLHNFNG…SGILKWGREP (450 aa). The segment covering 311–361 has biased composition (low complexity); that stretch reads SAKTPERATTVPVNTPVKPTDAPTKSPATATATATRAPVKATATPAKTLKP. The interval 311 to 371 is disordered; sequence SAKTPERATT…SDTPVKTPDG (61 aa). The 152-residue stretch at 371-522 folds into the CBM3 domain; sequence GEQSVKVRFY…SGILKWGREP (152 aa).

As to quaternary structure, interacts (via RsgI N-terminal anti-sigma domain) with SigI4.

The protein resides in the cell membrane. Functionally, anti-sigma factor for SigI4. Negatively regulates SigI4 activity through direct interaction. Binding of the polysaccharide substrate to the extracellular C-terminal sensing domain of RsgI4 may induce a conformational change in its N-terminal cytoplasmic region, leading to the release and activation of SigI4. This chain is Anti-sigma-I factor RsgI4, found in Acetivibrio thermocellus (strain ATCC 27405 / DSM 1237 / JCM 9322 / NBRC 103400 / NCIMB 10682 / NRRL B-4536 / VPI 7372) (Clostridium thermocellum).